The chain runs to 372 residues: Segmentation polarity homeobox protein engrailed (372 aa).

4 disordered regions span residues methionine 1–glutamine 35, tyrosine 47–threonine 112, glutamate 196–proline 246, and aspartate 261–alanine 286. 2 stretches are compositionally biased toward basic and acidic residues: residues aspartate 79–arginine 105 and arginine 197–aspartate 215. Positions serine 216–serine 244 are enriched in low complexity. The homeobox DNA-binding region spans glutamate 280–serine 339.

Belongs to the engrailed homeobox family. As to expression, expressed in the middle silk gland but not in the posterior silk gland during the fourth molt/fifth intermolt period.

The protein localises to the nucleus. Functionally, this protein might be involved in the compartmentalization of the silk gland. In Bombyx mori (Silk moth), this protein is Segmentation polarity homeobox protein engrailed (en).